Here is a 226-residue protein sequence, read N- to C-terminus: MPPHFLDGQPHGHTDRPRRVRQPGEPLRIGVGGPVGSGKTALVAALCRQLRDELSLAVLTNDIYTTEDADFLRRHAVLPDDRIAAVQTGGCPHTAIRDDITANLDAIDDLIAGHDDLDLILVESGGDNLTATFSSGLVDVQIFVIDVAGGDKVPRKGGPGVTFSDLLVVNKTDLAPLVGADLEVMRRDAAAVRGDRPFELISLAVDPAATPVLSWVREQLRVAQAV.

A disordered region spans residues 1-26 (MPPHFLDGQPHGHTDRPRRVRQPGEP). Position 33 to 40 (33 to 40 (GPVGSGKT)) interacts with GTP.

The protein belongs to the SIMIBI class G3E GTPase family. UreG subfamily. As to quaternary structure, homodimer. UreD, UreF and UreG form a complex that acts as a GTP-hydrolysis-dependent molecular chaperone, activating the urease apoprotein by helping to assemble the nickel containing metallocenter of UreC. The UreE protein probably delivers the nickel.

It localises to the cytoplasm. Functionally, facilitates the functional incorporation of the urease nickel metallocenter. This process requires GTP hydrolysis, probably effectuated by UreG. This Mycolicibacterium vanbaalenii (strain DSM 7251 / JCM 13017 / BCRC 16820 / KCTC 9966 / NRRL B-24157 / PYR-1) (Mycobacterium vanbaalenii) protein is Urease accessory protein UreG.